The chain runs to 326 residues: Protein TMED8 (326 aa).

The tract at residues 1-80 (MSDLQAAEGP…VSPGSKDATE (80 aa)) is disordered. One can recognise a GOLD domain in the interval 160–324 (PPCIWTFAKV…NKTLYFHIYY (165 aa)). Lysine 170 bears the N6-acetyllysine mark. The tract at residues 238–268 (DSCDDEDEEEEEEEEIEEPVPAGDVERGSRS) is disordered. Acidic residues predominate over residues 239–255 (SCDDEDEEEEEEEEIEE).

The sequence is that of Protein TMED8 (TMED8) from Pongo abelii (Sumatran orangutan).